Consider the following 543-residue polypeptide: Chaperonin GroEL (543 aa).

ATP-binding positions include 29-32 (TVGP), 86-90 (DGTTT), G413, and D504.

Belongs to the chaperonin (HSP60) family. Forms a cylinder of 14 subunits composed of two heptameric rings stacked back-to-back. Interacts with the co-chaperonin GroES.

It is found in the cytoplasm. The catalysed reaction is ATP + H2O + a folded polypeptide = ADP + phosphate + an unfolded polypeptide.. Together with its co-chaperonin GroES, plays an essential role in assisting protein folding. The GroEL-GroES system forms a nano-cage that allows encapsulation of the non-native substrate proteins and provides a physical environment optimized to promote and accelerate protein folding. The chain is Chaperonin GroEL from Mycoplasma genitalium (strain ATCC 33530 / DSM 19775 / NCTC 10195 / G37) (Mycoplasmoides genitalium).